The following is a 283-amino-acid chain: uncharacterized protein (283 aa).

Positions Met1–Leu10 are enriched in polar residues. Disordered regions lie at residues Met1–Asn96 and Asp255–Ile283. 2 stretches are compositionally biased toward basic and acidic residues: residues Lys14–Lys34 and Ser44–Arg81.

It belongs to the chlamydial CPn_0705/CT_671/TC_0042 family.

This is an uncharacterized protein from Chlamydia muridarum (strain MoPn / Nigg).